The primary structure comprises 568 residues: Dihydroxy-acid dehydratase (568 aa).

Cysteine 59 provides a ligand contact to [2Fe-2S] cluster. Residue aspartate 91 coordinates Mg(2+). Cysteine 132 provides a ligand contact to [2Fe-2S] cluster. Residues aspartate 133 and lysine 134 each contribute to the Mg(2+) site. Lysine 134 is subject to N6-carboxylysine. Cysteine 204 serves as a coordination point for [2Fe-2S] cluster. Glutamate 456 contacts Mg(2+). The active-site Proton acceptor is the serine 482.

This sequence belongs to the IlvD/Edd family. Homodimer. [2Fe-2S] cluster serves as cofactor. The cofactor is Mg(2+).

The catalysed reaction is (2R)-2,3-dihydroxy-3-methylbutanoate = 3-methyl-2-oxobutanoate + H2O. It catalyses the reaction (2R,3R)-2,3-dihydroxy-3-methylpentanoate = (S)-3-methyl-2-oxopentanoate + H2O. Its pathway is amino-acid biosynthesis; L-isoleucine biosynthesis; L-isoleucine from 2-oxobutanoate: step 3/4. It functions in the pathway amino-acid biosynthesis; L-valine biosynthesis; L-valine from pyruvate: step 3/4. Its function is as follows. Functions in the biosynthesis of branched-chain amino acids. Catalyzes the dehydration of (2R,3R)-2,3-dihydroxy-3-methylpentanoate (2,3-dihydroxy-3-methylvalerate) into 2-oxo-3-methylpentanoate (2-oxo-3-methylvalerate) and of (2R)-2,3-dihydroxy-3-methylbutanoate (2,3-dihydroxyisovalerate) into 2-oxo-3-methylbutanoate (2-oxoisovalerate), the penultimate precursor to L-isoleucine and L-valine, respectively. The sequence is that of Dihydroxy-acid dehydratase from Verminephrobacter eiseniae (strain EF01-2).